A 306-amino-acid chain; its full sequence is Beta-lactamase (306 aa).

The signal sequence occupies residues 1 to 36; that stretch reads MKLKTKASIKFGICVGLLCLSITGFTPFFNSTHAEA. S89 (acyl-ester intermediate) is an active-site residue. Residue 251 to 253 coordinates substrate; sequence KSG.

The protein belongs to the class-A beta-lactamase family.

It localises to the secreted. The catalysed reaction is a beta-lactam + H2O = a substituted beta-amino acid. Its function is as follows. This protein is a beta-lactamase with a substrate specificity for penicillins. The chain is Beta-lactamase (penP) from Bacillus subtilis (strain 168).